Here is a 333-residue protein sequence, read N- to C-terminus: L-lactate dehydrogenase A chain (333 aa).

NAD(+) contacts are provided by residues 30–58 (GAVG…IEDK) and Arg100. Substrate is bound by residues Arg107, Asn139, and Arg170. Residue Asn139 participates in NAD(+) binding. Catalysis depends on His194, which acts as the Proton acceptor. Thr249 is a binding site for substrate.

The protein belongs to the LDH/MDH superfamily. LDH family. In terms of assembly, homotetramer.

It localises to the cytoplasm. It catalyses the reaction (S)-lactate + NAD(+) = pyruvate + NADH + H(+). It participates in fermentation; pyruvate fermentation to lactate; (S)-lactate from pyruvate: step 1/1. In terms of biological role, interconverts simultaneously and stereospecifically pyruvate and lactate with concomitant interconversion of NADH and NAD(+). The sequence is that of L-lactate dehydrogenase A chain (LDHA) from Ambystoma mexicanum (Axolotl).